The chain runs to 163 residues: UPF0478 protein SAB1599c (163 aa).

The helical transmembrane segment at 7-27 (IAGIIAAIAFLILCIGIVAVL) threads the bilayer.

It belongs to the UPF0478 family.

It is found in the cell membrane. The protein is UPF0478 protein SAB1599c of Staphylococcus aureus (strain bovine RF122 / ET3-1).